A 194-amino-acid chain; its full sequence is Inosine triphosphate pyrophosphatase (194 aa).

10–15 (TGNANK) is an ITP binding site. Glutamate 41 contacts Mg(2+). ITP contacts are provided by residues lysine 54, 72-73 (DT), lysine 89, 147-150 (FGWD), lysine 172, and 177-178 (QR).

It belongs to the HAM1 NTPase family. In terms of assembly, homodimer. It depends on Mg(2+) as a cofactor. The cofactor is Mn(2+).

It is found in the cytoplasm. The protein localises to the nucleus. It catalyses the reaction ITP + H2O = IMP + diphosphate + H(+). The catalysed reaction is dITP + H2O = dIMP + diphosphate + H(+). It carries out the reaction XTP + H2O = XMP + diphosphate + H(+). Its function is as follows. Pyrophosphatase that hydrolyzes non-canonical purine nucleotides such as inosine triphosphate (ITP), deoxyinosine triphosphate (dITP) or xanthosine 5'-triphosphate (XTP) to their respective monophosphate derivatives. The enzyme does not distinguish between the deoxy- and ribose forms. Probably excludes non-canonical purines from RNA and DNA precursor pools, thus preventing their incorporation into RNA and DNA and avoiding chromosomal lesions. The sequence is that of Inosine triphosphate pyrophosphatase from Kluyveromyces lactis (strain ATCC 8585 / CBS 2359 / DSM 70799 / NBRC 1267 / NRRL Y-1140 / WM37) (Yeast).